Consider the following 361-residue polypeptide: 3-dehydroquinate synthase (361 aa).

Residues 106-110, 130-131, Lys143, and Lys152 contribute to the NAD(+) site; these read GVVGD and TT. 3 residues coordinate Zn(2+): Glu185, His247, and His264.

It belongs to the sugar phosphate cyclases superfamily. Dehydroquinate synthase family. Requires NAD(+) as cofactor. Co(2+) is required as a cofactor. Zn(2+) serves as cofactor.

Its subcellular location is the cytoplasm. The catalysed reaction is 7-phospho-2-dehydro-3-deoxy-D-arabino-heptonate = 3-dehydroquinate + phosphate. Its pathway is metabolic intermediate biosynthesis; chorismate biosynthesis; chorismate from D-erythrose 4-phosphate and phosphoenolpyruvate: step 2/7. Functionally, catalyzes the conversion of 3-deoxy-D-arabino-heptulosonate 7-phosphate (DAHP) to dehydroquinate (DHQ). The chain is 3-dehydroquinate synthase from Gloeobacter violaceus (strain ATCC 29082 / PCC 7421).